The sequence spans 120 residues: Large ribosomal subunit protein bL19c (120 aa).

This sequence belongs to the bacterial ribosomal protein bL19 family.

The protein resides in the plastid. The protein localises to the chloroplast. The protein is Large ribosomal subunit protein bL19c of Phaeodactylum tricornutum (strain CCAP 1055/1).